The chain runs to 283 residues: Thymidylate synthase (283 aa).

DUMP contacts are provided by residues Arg31 and 145–146 (RR). The active-site Nucleophile is the Cys165. DUMP contacts are provided by residues 185–188 (RSAD), Asn196, and 226–228 (HIY). Asp188 is a (6R)-5,10-methylene-5,6,7,8-tetrahydrofolate binding site. Ser282 is a binding site for (6R)-5,10-methylene-5,6,7,8-tetrahydrofolate.

The protein belongs to the thymidylate synthase family. Bacterial-type ThyA subfamily. In terms of assembly, homodimer.

The protein localises to the cytoplasm. The catalysed reaction is dUMP + (6R)-5,10-methylene-5,6,7,8-tetrahydrofolate = 7,8-dihydrofolate + dTMP. It functions in the pathway pyrimidine metabolism; dTTP biosynthesis. Its function is as follows. Catalyzes the reductive methylation of 2'-deoxyuridine-5'-monophosphate (dUMP) to 2'-deoxythymidine-5'-monophosphate (dTMP) while utilizing 5,10-methylenetetrahydrofolate (mTHF) as the methyl donor and reductant in the reaction, yielding dihydrofolate (DHF) as a by-product. This enzymatic reaction provides an intracellular de novo source of dTMP, an essential precursor for DNA biosynthesis. The polypeptide is Thymidylate synthase (Symbiobacterium thermophilum (strain DSM 24528 / JCM 14929 / IAM 14863 / T)).